Reading from the N-terminus, the 435-residue chain is Citrate synthase (435 aa).

Active-site residues include His-311 and Asp-370.

This sequence belongs to the citrate synthase family.

It catalyses the reaction oxaloacetate + acetyl-CoA + H2O = citrate + CoA + H(+). It functions in the pathway carbohydrate metabolism; tricarboxylic acid cycle; isocitrate from oxaloacetate: step 1/2. This Rickettsia bellii (strain RML369-C) protein is Citrate synthase (gltA).